The chain runs to 463 residues: MTARRDPKPGAKRLVRAQTLQKQRRAPVGPRAPPPDEEDPRLKCKNCRALGHTVRSTRCPMKCWKAALVPPTLGKKEGKENLKPWKPQVEANPGPLNKDKGEKEERPRQQDPQRKALLHIFSGKPPEKLLPNRKGSTESSVFLRVASRPMPVHTTSKRPCVDPELADRSATEMSGRGSVLASLSPLRKASLRSSSSLGPKERQTGAAADIPQPAVRHQGPEPLLVVKPTHSSREGGCREVPQAASKTHGLLQAVRPQAQDKRPAVTQPGPPAATHSLGLGSNLSFRPGAKRPAQAPIQGCLNFPKKPRLGPFQIPESAIQGGELGALENLQPPPAATELGPSTSPQMGRRTPAQVPGVDRQPPHSRPCLPTAQACTMSHHPAASHDGAQPLRVLFRRLENRRWSSSLLAAPSFHSPEKLGVFLAQSPHVSEKSEGPCVRVPPNVLYEDLQVSSSSEDSDSDLQ.

Disordered regions lie at residues 1-42, 67-115, 150-295, and 326-365; these read MTAR…DPRL, ALVP…PQRK, MPVH…PAQA, and ALEN…PPHS. 3 stretches are compositionally biased toward basic and acidic residues: residues 74 to 83, 97 to 114, and 159 to 170; these read GKKEGKENLK, NKDK…DPQR, and PCVDPELADRSA. Over residues 180–198 the composition is skewed to low complexity; that stretch reads LASLSPLRKASLRSSSSLG.

This sequence belongs to the FAM90 family.

The sequence is that of Putative protein FAM90A2P (FAM90A2P) from Homo sapiens (Human).